We begin with the raw amino-acid sequence, 3567 residues long: Sushi, von Willebrand factor type A, EGF and pentraxin domain-containing protein 1 (3567 aa).

A signal peptide spans 1–17 (MWSRLAFCCWALALVSG). One can recognise a VWFA domain in the interval 84–265 (ELVFLVDESS…LARRALHEDL (182 aa)). An N-linked (GlcNAc...) asparagine glycan is attached at Asn187. Sushi domains are found at residues 377–436 (VHCP…FCRV), 437–496 (RTCP…RCVE), and 497–561 (RHCA…VCKD). 6 cysteine pairs are disulfide-bonded: Cys379-Cys421, Cys407-Cys434, Cys439-Cys481, Cys467-Cys494, Cys499-Cys544, and Cys530-Cys559. HYR domains are found at residues 560–644 (KDVE…KVID) and 645–724 (VEPP…VIKG). Residues 725-789 (SPCEVPFTPV…YSTEWPDCAI (65 aa)) form the Sushi 4 domain. 20 cysteine pairs are disulfide-bonded: Cys727–Cys769, Cys753–Cys787, Cys1196–Cys1207, Cys1201–Cys1216, Cys1218–Cys1227, Cys1234–Cys1245, Cys1239–Cys1254, Cys1256–Cys1265, Cys1272–Cys1283, Cys1277–Cys1292, Cys1294–Cys1303, Cys1310–Cys1321, Cys1315–Cys1330, Cys1332–Cys1341, Cys1348–Cys1359, Cys1353–Cys1368, Cys1370–Cys1379, Cys1386–Cys1397, Cys1391–Cys1406, and Cys1408–Cys1417. The EGF-like 1 domain maps to 1192–1228 (VFHECFLNPCHNSGTCQQLGRGYVCLCPPGYTGLKCE). The 37-residue stretch at 1230–1266 (DIDECSSLPCLNGGICRDQVGGFTCECSLGYSGQICE) folds into the EGF-like 2; calcium-binding domain. Residues 1268 to 1304 (NINECISSPCLNKGTCTDGLASYRCTCVKGYMGVHCE) enclose the EGF-like 3; calcium-binding domain. The EGF-like 4; calcium-binding domain maps to 1306–1342 (DVNECQSSPCLNNAVCKDQVGGFSCKCPPGFLGTRCE). Residues 1344–1380 (NVDECLSQPCQNGATCKDGANSFRCQCPAGFTGTHCE) enclose the EGF-like 5; calcium-binding domain. The 37-residue stretch at 1382–1418 (NINECQSNPCRNQATCVDELNSYSCKCQPGFSGHRCE) folds into the EGF-like 6; calcium-binding domain. Residues 1423–1627 (SGFNLDFEVS…VKVDSSSMFC (205 aa)) form the Pentraxin (PTX) domain. 2 Sushi domains span residues 1628-1686 (SDCP…HCER) and 1687-1744 (IRCG…SCLD). Cystine bridges form between Cys1630-Cys1671, Cys1657-Cys1684, Cys1689-Cys1729, Cys1715-Cys1742, Cys1748-Cys1760, Cys1754-Cys1769, Cys1771-Cys1782, Cys1788-Cys1828, Cys1814-Cys1841, Cys1846-Cys1886, Cys1872-Cys1899, Cys1904-Cys1944, Cys1930-Cys1957, Cys1962-Cys2002, Cys1988-Cys2015, Cys2020-Cys2060, Cys2046-Cys2077, Cys2082-Cys2125, Cys2111-Cys2140, Cys2145-Cys2185, Cys2171-Cys2198, Cys2203-Cys2244, Cys2230-Cys2258, Cys2263-Cys2303, Cys2289-Cys2317, Cys2322-Cys2362, Cys2348-Cys2375, Cys2380-Cys2421, Cys2407-Cys2434, Cys2439-Cys2479, Cys2465-Cys2492, Cys2497-Cys2537, Cys2523-Cys2550, Cys2555-Cys2595, and Cys2581-Cys2607. The 40-residue stretch at 1744–1783 (DVDECAVGSDCSEHASCLNTNGSYVCSCNPPYTGDGKNCA) folds into the EGF-like 7; calcium-binding domain. Sushi domains are found at residues 1780-1843 (KNCA…SCEA), 1844-1901 (ISCG…VCEL), 1902-1959 (VKCS…SCQL), 1960-2017 (VSCG…QCLA), 2018-2079 (VSCD…RCIA), 2080-2142 (HFCE…QCIP), 2143-2200 (VRCG…TCHP), 2201-2260 (VSCN…SCTP), 2261-2319 (LNCG…KCVP), 2320-2377 (TKCA…ICKM), 2378-2436 (VLCP…ECVP), 2437-2494 (VECP…MCKP), 2495-2552 (IECP…SCDA), and 2553-2609 (IHCS…TCVP). An important for the interaction with integrin ITGA9:ITGB1 region spans residues 2638 to 2645 (DMMEVPYL). 14 Sushi domains span residues 2660 to 2711 (NTKE…SCIS), 2712 to 2769 (IECD…RCEA), 2770 to 2827 (ISCS…MCIP), 2828 to 2885 (VDCG…SCMP), 2886 to 2943 (VRCP…VCKP), 2944 to 3001 (ATCG…SCLP), 3002 to 3057 (CRCS…LCEH), 3058 to 3115 (AQCG…TCEP), 3116 to 3174 (LSCG…TCSP), 3175 to 3234 (KKCP…SCIP), 3235 to 3292 (VVCG…VCRE), 3293 to 3350 (NRCE…LCKP), 3351 to 3409 (NPCP…RCEK), and 3410 to 3466 (ISCG…VCRA). 33 cysteine pairs are disulfide-bonded: Cys2682–Cys2709, Cys2714–Cys2754, Cys2740–Cys2767, Cys2772–Cys2812, Cys2798–Cys2825, Cys2830–Cys2870, Cys2856–Cys2883, Cys2888–Cys2928, Cys2914–Cys2941, Cys2946–Cys2986, Cys2972–Cys2999, Cys3004–Cys3043, Cys3029–Cys3055, Cys3060–Cys3100, Cys3086–Cys3113, Cys3118–Cys3159, Cys3144–Cys3172, Cys3177–Cys3217, Cys3203–Cys3232, Cys3237–Cys3277, Cys3263–Cys3290, Cys3295–Cys3335, Cys3321–Cys3348, Cys3353–Cys3394, Cys3380–Cys3407, Cys3412–Cys3452, Cys3438–Cys3464, Cys3500–Cys3510, Cys3504–Cys3516, Cys3518–Cys3527, Cys3532–Cys3542, Cys3536–Cys3548, and Cys3550–Cys3559. EGF-like domains follow at residues 3496-3528 (EEPICILPCLNGGRCVAPYQCDCPTGWTGSRCH) and 3529-3560 (TATCQSPCLNGGKCIRPNRCHCLSAWTGHDCS).

In terms of assembly, interacts (via Sushi domain 21) with ITGA9:ITGB1; thereby inhibits Ca(2+) intracellular signaling and as a result represses vasocontraction. Interacts (via Sushi domain 21) with ITGA4:ITGB1; thereby inhibits Ca(2+) intracellular signaling and as a result represses vasocontraction. Interacts with ANGPT1 and ANGPT2. Interacts with PEAR1 (via extracellular domain). Interacts with HSPG2, TLN1, FN1, COPA, CCT2, IQGAP1, LAMC1 and NID1. Interacts (via C-terminus) with TIE1. Expressed in the media layer of the arterial wall (at protein level). Highly expressed in lung and placenta, weakly expressed in the kidney, heart, brain and spleen. Also expressed in bone and periosteum, but not in cartilage and skeletal muscle.

It localises to the secreted. Its subcellular location is the nucleus. The protein resides in the cytoplasm. The protein localises to the membrane. Its function is as follows. Required for morphological development, cell alignment and migration of lymphatic endothelial cells during embryonic development, potentially via modulation of ANGPT2-TIE1 signaling and subsequent activation of FOXC2 transcription. Required for embryonic lymphatic vascular development, via mediating the correct formation of the first lymphovenous contact site and tight association of the lymphatic endothelium with the venous endothelium. Represses PRKCA-mediated L-type voltage-gated channel Ca(2+) influx and ROCK-mediated calcium sensitivity in vascular smooth muscle cells, via its interaction with integrins, thereby inhibiting vasocontraction. Promotes platelet activation, via its interaction with PEAR1 and subsequent activation of AKT/mTOR signaling. Plays a role in epidermal development and keratinocyte differentiation, independent of cell-cell adhesion. May play a role in initial cell attachment of stromal osteogenic cells. May promote myoblast cell adhesion when in the presence of integrin ITGA9:ITGB1. This Mus musculus (Mouse) protein is Sushi, von Willebrand factor type A, EGF and pentraxin domain-containing protein 1 (Svep1).